Reading from the N-terminus, the 274-residue chain is 2,3,4,5-tetrahydropyridine-2,6-dicarboxylate N-succinyltransferase (274 aa).

The substrate site is built by Arg104 and Asp141.

The protein belongs to the transferase hexapeptide repeat family. In terms of assembly, homotrimer.

It localises to the cytoplasm. The enzyme catalyses (S)-2,3,4,5-tetrahydrodipicolinate + succinyl-CoA + H2O = (S)-2-succinylamino-6-oxoheptanedioate + CoA. The protein operates within amino-acid biosynthesis; L-lysine biosynthesis via DAP pathway; LL-2,6-diaminopimelate from (S)-tetrahydrodipicolinate (succinylase route): step 1/3. The chain is 2,3,4,5-tetrahydropyridine-2,6-dicarboxylate N-succinyltransferase from Shewanella baltica (strain OS155 / ATCC BAA-1091).